Reading from the N-terminus, the 657-residue chain is Translation factor GUF1, mitochondrial (657 aa).

A mitochondrion-targeting transit peptide spans 1–39 (MRGCLQSVKWLTSALRPSQSLASSTRYPRRLLSTSAPRN). The region spanning 59–239 (ERFRNFCIVA…TVIEQIPAPV (181 aa)) is the tr-type G domain. GTP contacts are provided by residues 68–75 (AHVDHGKS), 132–136 (DTPGH), and 186–189 (NKVD).

The protein belongs to the TRAFAC class translation factor GTPase superfamily. Classic translation factor GTPase family. LepA subfamily.

The protein localises to the mitochondrion inner membrane. The catalysed reaction is GTP + H2O = GDP + phosphate + H(+). In terms of biological role, promotes mitochondrial protein synthesis. May act as a fidelity factor of the translation reaction, by catalyzing a one-codon backward translocation of tRNAs on improperly translocated ribosomes. Binds to mitochondrial ribosomes in a GTP-dependent manner. The chain is Translation factor GUF1, mitochondrial from Ajellomyces capsulatus (strain G186AR / H82 / ATCC MYA-2454 / RMSCC 2432) (Darling's disease fungus).